A 145-amino-acid chain; its full sequence is D-aminoacyl-tRNA deacylase (145 aa).

The Gly-cisPro motif, important for rejection of L-amino acids motif lies at 137–138; sequence GP.

It belongs to the DTD family. Homodimer.

The protein localises to the cytoplasm. It carries out the reaction glycyl-tRNA(Ala) + H2O = tRNA(Ala) + glycine + H(+). The enzyme catalyses a D-aminoacyl-tRNA + H2O = a tRNA + a D-alpha-amino acid + H(+). In terms of biological role, an aminoacyl-tRNA editing enzyme that deacylates mischarged D-aminoacyl-tRNAs. Also deacylates mischarged glycyl-tRNA(Ala), protecting cells against glycine mischarging by AlaRS. Acts via tRNA-based rather than protein-based catalysis; rejects L-amino acids rather than detecting D-amino acids in the active site. By recycling D-aminoacyl-tRNA to D-amino acids and free tRNA molecules, this enzyme counteracts the toxicity associated with the formation of D-aminoacyl-tRNA entities in vivo and helps enforce protein L-homochirality. This Shewanella piezotolerans (strain WP3 / JCM 13877) protein is D-aminoacyl-tRNA deacylase.